The following is a 2406-amino-acid chain: Highly reducing polyketide synthase dmxL2 (2406 aa).

Residues 1-399 (MEAFWSASKK…GTNAHAVLDD (399 aa)) enclose the Ketosynthase family 3 (KS3) domain. Cysteine 130 is an active-site residue. Cysteine 130 acts as the For beta-ketoacyl synthase activity in catalysis. Residues 414-476 (GHASNGTNGT…GPTDGPTSRP (63 aa)) are disordered. Positions 417-448 (SNGTNGTLTNGHILNGEHTSNGMNGTLTNGHA) are enriched in polar residues. The malonyl-CoA:ACP transacylase (MAT) domain stretch occupies residues 574 to 911 (FVFTGQGAQW…LAGSLFTQGY (338 aa)). Catalysis depends on serine 665, which acts as the For malonyltransferase activity. The N-terminal hotdog fold stretch occupies residues 962 to 1096 (PSLLGSPSPS…GLLVIEYEAA (135 aa)). Positions 962–1278 (PSLLGSPSPS…CAEIAGASSN (317 aa)) constitute a PKS/mFAS DH domain. The interval 964 to 1273 (LLGSPSPSLA…IEGFLCAEIA (310 aa)) is dehydratase (DH) domain. Histidine 994 functions as the Proton acceptor; for dehydratase activity in the catalytic mechanism. Positions 1124–1278 (VHRLDPSGFY…CAEIAGASSN (155 aa)) are C-terminal hotdog fold. The active-site Proton donor; for dehydratase activity is the aspartate 1189. Residues 1694–2006 (GMLGSVCLEP…TGKHLGKIAL (313 aa)) are enoylreductase (ER) domain. A ketoreductase (KR) domain region spans residues 2032–2210 (GVYLLVGGLG…TTVDLGIMRD (179 aa)). One can recognise a Carrier domain in the interval 2318-2395 (EASDSVLEAL…TFCNRIAAKS (78 aa)). An O-(pantetheine 4'-phosphoryl)serine modification is found at serine 2355.

Its pathway is secondary metabolite biosynthesis. In terms of biological role, highly reducing polyketide synthase; part of the gene cluster that mediates the biosynthesis of the dimeric xanthones cryptosporioptides. The pathway begins with the synthesis of atrochrysone thioester by the polyketide synthase dmx-nrPKS. The atrochrysone carboxyl ACP thioesterase dmxR1 then breaks the thioester bond and releases the atrochrysone carboxylic acid from dmx-nrPKS. Atrochrysone carboxylic acid is decarboxylated by the decarboxylase dmxR15, and oxidized by the anthrone oxygenase dmxR16 to yield emodin. Emodin is then reduced to emodin hydroquinone by the oxidoreductase dmxR7. A-ring reduction by the short chain dehydrogenase dmxR18, dehydration by the scytalone dehydratase-like protein dmxR17 and probable spontaneous re-oxidation, results in overall deoxygenation to chrysophanol. Baeyer-Villiger oxidation by the Baeyer-Villiger monooxygenase (BVMO) dmxR6 then yields monodictylactone in equilibrium with monodictyphenone. In the case of the cryptosporioptides biosynthesis, monodictylactone is reduced at C-12 to an alcohol (by the short chain dehydrogenases dmxR12 or dmxR8) and hydroxylated at C-5 by dmxR9, yielding the electron-rich aromatic which could eliminate H(2)O to form the ortho-quinonemethide, followed by tautomerisation to paraquinone and complete the formal reduction to produce the 10-methylgroup. Conjugate addition of C-4a-OH to the resulting paraquinone by the monooxygenase dmxR10 then gives cyclohexadienone, which is then reduced at C-5 by the short chain dehydrogenase dmxR3 to give the dihydroxanthone. The 6,7-epoxide in the cryptosporioptides could be introduced by the cytochrome P450 monooxygenase dmxL3. The highly reducing PKS dmxL2 manufactures butyrate, which is further carboxylated by dmxL1 to form ethylmalonate. It is not yet clear whether the carboxylation occurs while the butyrate is attached to the ACP of dmxL2, but this unusual fungal metabolite could then be esterified to O-5 by the O-acetyltransferase dmxR13. Finally, dimerization performed by dmxR5 gives the observed dimers cryptosporioptides A, B and C as the final products of the pathway. The polypeptide is Highly reducing polyketide synthase dmxL2 (Cryptosporiopsis sp. (strain 8999)).